The sequence spans 200 residues: Large ribosomal subunit protein uL4 (200 aa).

The interval 38 to 72 (GRQGTKQQKTRSDVAGGGKRPWRQKGTGRARAGTT) is disordered.

It belongs to the universal ribosomal protein uL4 family. In terms of assembly, part of the 50S ribosomal subunit.

In terms of biological role, one of the primary rRNA binding proteins, this protein initially binds near the 5'-end of the 23S rRNA. It is important during the early stages of 50S assembly. It makes multiple contacts with different domains of the 23S rRNA in the assembled 50S subunit and ribosome. Forms part of the polypeptide exit tunnel. The protein is Large ribosomal subunit protein uL4 of Pseudomonas entomophila (strain L48).